The chain runs to 543 residues: Chaperonin GroEL (543 aa).

ATP contacts are provided by residues 31-34 (TMGP), 88-92 (DGTTT), Gly-415, 479-481 (DAL), and Asp-495.

The protein belongs to the chaperonin (HSP60) family. As to quaternary structure, forms a cylinder of 14 subunits composed of two heptameric rings stacked back-to-back. Interacts with the co-chaperonin GroES.

Its subcellular location is the cytoplasm. It catalyses the reaction ATP + H2O + a folded polypeptide = ADP + phosphate + an unfolded polypeptide.. Together with its co-chaperonin GroES, plays an essential role in assisting protein folding. The GroEL-GroES system forms a nano-cage that allows encapsulation of the non-native substrate proteins and provides a physical environment optimized to promote and accelerate protein folding. This Clostridium tetani (strain Massachusetts / E88) protein is Chaperonin GroEL.